Reading from the N-terminus, the 406-residue chain is GTPase Obg (406 aa).

Residues 1-159 form the Obg domain; that stretch reads MKFVDEVSIH…RDLKLELKVL (159 aa). Residues 127-148 form a disordered region; the sequence is NTRFKSSTNRAPRQTTPGKPGE. The segment covering 129–143 has biased composition (polar residues); sequence RFKSSTNRAPRQTTP. Residues 160-334 enclose the OBG-type G domain; the sequence is ADVGLLGLPN…LSQDIMRYLD (175 aa). GTP contacts are provided by residues 166 to 173, 191 to 195, 213 to 216, 283 to 286, and 315 to 317; these read GLPNAGKS, FTTLV, DIPG, NKMD, and SAL. Positions 173 and 193 each coordinate Mg(2+). Residues 378–406 form a disordered region; the sequence is GLKNAGAADDDDFDDEEDDGDGPEIFYVP. Residues 385-399 are compositionally biased toward acidic residues; it reads ADDDDFDDEEDDGDG.

This sequence belongs to the TRAFAC class OBG-HflX-like GTPase superfamily. OBG GTPase family. In terms of assembly, monomer. The cofactor is Mg(2+).

It localises to the cytoplasm. Its function is as follows. An essential GTPase which binds GTP, GDP and possibly (p)ppGpp with moderate affinity, with high nucleotide exchange rates and a fairly low GTP hydrolysis rate. Plays a role in control of the cell cycle, stress response, ribosome biogenesis and in those bacteria that undergo differentiation, in morphogenesis control. This is GTPase Obg from Pseudomonas paraeruginosa (strain DSM 24068 / PA7) (Pseudomonas aeruginosa (strain PA7)).